We begin with the raw amino-acid sequence, 90 residues long: U-scoloptoxin(15)-Sa3a (90 aa).

A signal peptide spans 1–18 (MKMVYLGLFLIITSCVIS).

It belongs to the scoloptoxin-15 family. Contains 3 disulfide bonds. As to expression, expressed by the venom gland.

Its subcellular location is the secreted. The protein is U-scoloptoxin(15)-Sa3a of Scolopendra alternans (Florida Keys giant centipede).